We begin with the raw amino-acid sequence, 332 residues long: Centrosomal AT-AC splicing factor (332 aa).

The tract at residues 1 to 169 (MAPAQRCPLC…QSRQEVVRSV (169 aa)) is required for centrosome location. Position 31 is an N6-acetyllysine; by NAT10 (Lys-31). A coiled-coil region spans residues 137 to 168 (LDSYEEKEDKVIKEMAAQIREVEQSRQEVVRS). Positions 169-213 (VLEPQAVPDPEEGSSAPRSWKGMNSQVASSLQQPSNLDLPPAPEL) are disordered. The segment covering 190–204 (GMNSQVASSLQQPSN) has biased composition (polar residues).

Interacts with SASS6; the interaction increases with CENATAC acetylation. Post-translationally, acetylated. Acetylation oscillates throughout the cell cycle, and the acetylation state at Lys-31 is regulated by the deacetylase SIRT1 and the acetyltransferase NAT10. Deacetylated CENATAC is responsible for its centrosome targeting, and acetylated CENATAC promotes SASS6 degradation by enhancing the binding affinity of SASS6 for APC/C E3 ubiquitin-protein ligase complex/FZR1.

It is found in the cytoplasm. Its subcellular location is the cytoskeleton. It localises to the microtubule organizing center. The protein localises to the centrosome. Component of the minor spliceosome that promotes splicing of a specific, rare minor intron subtype. Negative regulator of centrosome duplication. Constrains centriole number by modulating the degradation of the centrosome-duplication-associated protein SASS6 in an acetylation-dependent manner. SIRT1 deacetylates CENATAC in G1 phase, allowing for SASS6 accumulation on the centrosome and subsequent procentriole assembly. The CENATAC acetylation level is restored in mitosis by NAT10, promoting SASS6 proteasome degradation by facilitating SASS6 binding to APC/C E3 ubiquitin-protein ligase complex/FZR1. This chain is Centrosomal AT-AC splicing factor, found in Homo sapiens (Human).